A 482-amino-acid chain; its full sequence is tRNA sulfurtransferase (482 aa).

The 105-residue stretch at 61–165 (LAIRDALTRI…DDRLLLIKGR (105 aa)) folds into the THUMP domain. ATP is bound by residues 183–184 (LI), lysine 265, glycine 287, and glutamine 296. Cysteine 344 and cysteine 456 are oxidised to a cystine. In terms of domain architecture, Rhodanese spans 404–482 (FGPNDVILDI…GFNNVKVYRP (79 aa)). Cysteine 456 serves as the catalytic Cysteine persulfide intermediate.

Belongs to the ThiI family.

Its subcellular location is the cytoplasm. It catalyses the reaction [ThiI sulfur-carrier protein]-S-sulfanyl-L-cysteine + a uridine in tRNA + 2 reduced [2Fe-2S]-[ferredoxin] + ATP + H(+) = [ThiI sulfur-carrier protein]-L-cysteine + a 4-thiouridine in tRNA + 2 oxidized [2Fe-2S]-[ferredoxin] + AMP + diphosphate. The catalysed reaction is [ThiS sulfur-carrier protein]-C-terminal Gly-Gly-AMP + S-sulfanyl-L-cysteinyl-[cysteine desulfurase] + AH2 = [ThiS sulfur-carrier protein]-C-terminal-Gly-aminoethanethioate + L-cysteinyl-[cysteine desulfurase] + A + AMP + 2 H(+). Its pathway is cofactor biosynthesis; thiamine diphosphate biosynthesis. Catalyzes the ATP-dependent transfer of a sulfur to tRNA to produce 4-thiouridine in position 8 of tRNAs, which functions as a near-UV photosensor. Also catalyzes the transfer of sulfur to the sulfur carrier protein ThiS, forming ThiS-thiocarboxylate. This is a step in the synthesis of thiazole, in the thiamine biosynthesis pathway. The sulfur is donated as persulfide by IscS. This chain is tRNA sulfurtransferase, found in Escherichia coli (strain K12 / MC4100 / BW2952).